The primary structure comprises 399 residues: Cell division protein FtsZ (399 aa).

Residues 30 to 34 (GGGSN), 117 to 119 (GTG), glutamate 148, lysine 152, and aspartate 196 contribute to the GTP site. The interval 349–368 (TLMSGNQNAPSGSYEQQDSS) is disordered. The span at 351–368 (MSGNQNAPSGSYEQQDSS) shows a compositional bias: polar residues.

It belongs to the FtsZ family. As to quaternary structure, homodimer. Polymerizes to form a dynamic ring structure in a strictly GTP-dependent manner. Interacts directly with several other division proteins.

The protein localises to the cytoplasm. Essential cell division protein that forms a contractile ring structure (Z ring) at the future cell division site. The regulation of the ring assembly controls the timing and the location of cell division. One of the functions of the FtsZ ring is to recruit other cell division proteins to the septum to produce a new cell wall between the dividing cells. Binds GTP and shows GTPase activity. The protein is Cell division protein FtsZ of Borreliella burgdorferi (strain ATCC 35210 / DSM 4680 / CIP 102532 / B31) (Borrelia burgdorferi).